We begin with the raw amino-acid sequence, 391 residues long: S-adenosylmethionine synthase (391 aa).

The interval 1–20 (MPRSDYLFTSESVSEGHPDK) is disordered. Position 17 (histidine 17) interacts with ATP. Aspartate 19 contacts Mg(2+). Residue glutamate 45 coordinates K(+). Residues glutamate 58 and glutamine 102 each coordinate L-methionine. A flexible loop region spans residues 102 to 112 (QSADIAQGVDA). ATP is bound by residues 169–171 (DAK), 235–236 (KF), aspartate 244, 250–251 (RK), alanine 267, and lysine 271. Aspartate 244 is a binding site for L-methionine. An L-methionine-binding site is contributed by lysine 275.

This sequence belongs to the AdoMet synthase family. Homotetramer; dimer of dimers. Mg(2+) is required as a cofactor. The cofactor is K(+).

The protein resides in the cytoplasm. The enzyme catalyses L-methionine + ATP + H2O = S-adenosyl-L-methionine + phosphate + diphosphate. It participates in amino-acid biosynthesis; S-adenosyl-L-methionine biosynthesis; S-adenosyl-L-methionine from L-methionine: step 1/1. Functionally, catalyzes the formation of S-adenosylmethionine (AdoMet) from methionine and ATP. The overall synthetic reaction is composed of two sequential steps, AdoMet formation and the subsequent tripolyphosphate hydrolysis which occurs prior to release of AdoMet from the enzyme. This is S-adenosylmethionine synthase from Methylorubrum extorquens (strain CM4 / NCIMB 13688) (Methylobacterium extorquens).